The primary structure comprises 111 residues: UPF0342 protein gbs1446 (111 aa).

Belongs to the UPF0342 family.

This is UPF0342 protein gbs1446 from Streptococcus agalactiae serotype III (strain NEM316).